The sequence spans 660 residues: DNA mismatch repair protein MutL (660 aa).

It belongs to the DNA mismatch repair MutL/HexB family.

Its function is as follows. This protein is involved in the repair of mismatches in DNA. It is required for dam-dependent methyl-directed DNA mismatch repair. May act as a 'molecular matchmaker', a protein that promotes the formation of a stable complex between two or more DNA-binding proteins in an ATP-dependent manner without itself being part of a final effector complex. This Streptococcus pyogenes serotype M1 protein is DNA mismatch repair protein MutL.